Consider the following 251-residue polypeptide: Probable phosphatase Sama_2233 (251 aa).

9 residues coordinate Zn(2+): His-8, His-10, His-16, His-41, Glu-74, His-102, His-132, Asp-193, and His-195.

It belongs to the PHP family. Zn(2+) serves as cofactor.

This is Probable phosphatase Sama_2233 from Shewanella amazonensis (strain ATCC BAA-1098 / SB2B).